Reading from the N-terminus, the 236-residue chain is B-cell antigen receptor complex-associated protein alpha chain (236 aa).

The first 32 residues, 1–32 (MPGGPGLLQALCATTFLLFLISAGGLGPGSQA), serve as a signal peptide directing secretion. The region spanning 33–122 (LWVDGGPPSM…EKDLNQKILS (90 aa)) is the Ig-like C2-type domain. The Extracellular portion of the chain corresponds to 33–151 (LWVDGGPPSM…LDMGEGTKNN (119 aa)). Residues C54 and C109 are joined by a disulfide bond. N66 and N76 each carry an N-linked (GlcNAc...) asparagine glycan. A helical membrane pass occupies residues 152-172 (IITAEGIILLFCAVVPGTLLL). The Cytoplasmic segment spans residues 173–236 (FRKRWQNMKF…GDGDVQLEKP (64 aa)). One can recognise an ITAM domain in the interval 185–213 (DAQDDYEDENLYEGLNLDDCSMYEDISRG). Residue Y196 is modified to Phosphotyrosine; by SRC-type Tyr-kinases. Y207 carries the phosphotyrosine modification. An Asymmetric dimethylarginine; by PRMT1 modification is found at R212. Position 218 is a phosphotyrosine; by Tyr-kinases (Y218).

As to quaternary structure, heterodimer of alpha and beta chains; disulfide-linked. Part of the B-cell antigen receptor complex where the alpha/beta chain heterodimer is non-covalently associated with an antigen-specific membrane-bound surface immunoglobulin of two heavy chains and two light chains. Interacts through its phosphorylated ITAM domain with the SH2 domains of SYK which stimulates SYK autophosphorylation and activation. Also interacts, when phosphorylated on Tyr-207, with the SH2 domain of BLNK/SLP65, bringing BLNK into proximity with SYK and allowing SYK to phosphorylate BLNK which is necessary for trafficking of the BCR to late endosomes. Interacts with Src-family tyrosine kinases including FYN and LYN, increasing their activity. In terms of processing, phosphorylated on tyrosine, serine and threonine residues upon B-cell activation. Phosphorylation of tyrosine residues by Src-family kinases, including LYN, is an early and essential feature of the BCR signaling cascade. The phosphorylated tyrosines serve as docking sites for SH2-domain containing kinases, leading to their activation which in turn leads to phosphorylation of downstream targets. Phosphorylation of serine and threonine residues may prevent subsequent tyrosine phosphorylation. Post-translationally, arginine methylation in the ITAM domain may interfere with the binding of SYK. It promotes signals leading to B-cell differentiation.

The protein resides in the cell membrane. In terms of biological role, required in cooperation with CD79B for initiation of the signal transduction cascade activated by binding of antigen to the B-cell antigen receptor complex (BCR) which leads to internalization of the complex, trafficking to late endosomes and antigen presentation. Also required for BCR surface expression and for efficient differentiation of pro- and pre-B-cells. Stimulates SYK autophosphorylation and activation. Binds to BLNK, bringing BLNK into proximity with SYK and allowing SYK to phosphorylate BLNK. Also interacts with and increases activity of some Src-family tyrosine kinases. Represses BCR signaling during development of immature B-cells. This chain is B-cell antigen receptor complex-associated protein alpha chain (CD79A), found in Canis lupus familiaris (Dog).